The chain runs to 128 residues: Sulfurtransferase TusD (128 aa).

The active-site Cysteine persulfide intermediate is the C78.

Belongs to the DsrE/TusD family. Heterohexamer, formed by a dimer of trimers. The hexameric TusBCD complex contains 2 copies each of TusB, TusC and TusD. The TusBCD complex interacts with TusE.

Its subcellular location is the cytoplasm. Functionally, part of a sulfur-relay system required for 2-thiolation of 5-methylaminomethyl-2-thiouridine (mnm(5)s(2)U) at tRNA wobble positions. Accepts sulfur from TusA and transfers it in turn to TusE. The chain is Sulfurtransferase TusD from Salmonella arizonae (strain ATCC BAA-731 / CDC346-86 / RSK2980).